We begin with the raw amino-acid sequence, 431 residues long: MFDLSLENCRVDRDLTVNIGVDDGKIVQISRGRIDASEKIDLKGYFVLPGLIDAHVHFRDPGLEYKEDFRTGSMAAAHGGFSTVLDMPNTVPPADNAAEFERKIRIGERKSVVDFGLHAGFRSVSDVKGILRFMPASFKVFMDLTGISTVDGLFRELKDLSAPVPVTVHCENRDVVMKSMKELKDRSDPSAYALARPPLAEEVSVAEVLALSIHHEHPVHICHLSTVKALQLVEPFREYVTCEVTPHHLLLDSGAFRRFGTMVKTNPPLRPPESRIYPEFLDRINIIGTDHAPHGIEEKRKGIWDAPPGIPNLEVVLKLLLTLVSKGRMSLSTIRRMLAEEPARIFGLRSKGRIAEGMDADFTVIDLKETGRIRSDEFYSKAHYTPFEGFSYTGGPVMTIVRGRAVMRDGEVLEGNGRYIPAEHDGKHGSA.

The Zn(2+) site is built by His-55 and His-57. Substrate is bound by residues 57–59 (HFR) and Asn-89. The Zn(2+) site is built by Lys-139, His-169, His-223, and Asp-290. Lys-139 carries the post-translational modification N6-carboxylysine. Asp-290 is an active-site residue. Residues His-294 and 308 to 309 (PG) each bind substrate.

This sequence belongs to the metallo-dependent hydrolases superfamily. DHOase family. Class I DHOase subfamily. Requires Zn(2+) as cofactor.

The catalysed reaction is (S)-dihydroorotate + H2O = N-carbamoyl-L-aspartate + H(+). It functions in the pathway pyrimidine metabolism; UMP biosynthesis via de novo pathway; (S)-dihydroorotate from bicarbonate: step 3/3. Catalyzes the reversible cyclization of carbamoyl aspartate to dihydroorotate. This chain is Dihydroorotase, found in Methanothermobacter thermautotrophicus (strain ATCC 29096 / DSM 1053 / JCM 10044 / NBRC 100330 / Delta H) (Methanobacterium thermoautotrophicum).